Here is a 451-residue protein sequence, read N- to C-terminus: ATP synthase subunit beta (451 aa).

Position 143–150 (143–150 (GGAGVGKT)) interacts with ATP.

This sequence belongs to the ATPase alpha/beta chains family. As to quaternary structure, F-type ATPases have 2 components, CF(1) - the catalytic core - and CF(0) - the membrane proton channel. CF(1) has five subunits: alpha(3), beta(3), gamma(1), delta(1), epsilon(1). CF(0) has three main subunits: a(1), b(2) and c(9-12). The alpha and beta chains form an alternating ring which encloses part of the gamma chain. CF(1) is attached to CF(0) by a central stalk formed by the gamma and epsilon chains, while a peripheral stalk is formed by the delta and b chains.

Its subcellular location is the cell membrane. It carries out the reaction ATP + H2O + 4 H(+)(in) = ADP + phosphate + 5 H(+)(out). Produces ATP from ADP in the presence of a proton gradient across the membrane. The catalytic sites are hosted primarily by the beta subunits. The sequence is that of ATP synthase subunit beta from Coprothermobacter proteolyticus (strain ATCC 35245 / DSM 5265 / OCM 4 / BT).